Consider the following 314-residue polypeptide: Methionyl-tRNA formyltransferase (314 aa).

(6S)-5,6,7,8-tetrahydrofolate is bound at residue 111 to 114; it reads SLLP.

Belongs to the Fmt family.

It carries out the reaction L-methionyl-tRNA(fMet) + (6R)-10-formyltetrahydrofolate = N-formyl-L-methionyl-tRNA(fMet) + (6S)-5,6,7,8-tetrahydrofolate + H(+). Attaches a formyl group to the free amino group of methionyl-tRNA(fMet). The formyl group appears to play a dual role in the initiator identity of N-formylmethionyl-tRNA by promoting its recognition by IF2 and preventing the misappropriation of this tRNA by the elongation apparatus. The chain is Methionyl-tRNA formyltransferase from Chlorobium chlorochromatii (strain CaD3).